The primary structure comprises 367 residues: Nociceptin receptor (367 aa).

Residues 1–45 (MESLFPAPYWEVLYGSHFQGNLSLLNETVPHHLLLNASHSAFLPL) lie on the Extracellular side of the membrane. Residues N21, N26, and N36 are each glycosylated (N-linked (GlcNAc...) asparagine). The helical transmembrane segment at 46–71 (GLKVTIVGLYLAVCIGGLLGNCLVMY) threads the bilayer. Over 72–84 (VILRHTKMKTATN) the chain is Cytoplasmic. The chain crosses the membrane as a helical span at residues 85–106 (IYIFNLALADTLVLLTLPFQGT). Over 107–121 (DILLGFWPFGNALCK) the chain is Extracellular. The cysteines at positions 120 and 197 are disulfide-linked. The chain crosses the membrane as a helical span at residues 122-143 (TVIAIDYYNMFTSTFTLTAMSV). Over 144–162 (DRYVAICHPIRALDVRTSS) the chain is Cytoplasmic. Residues 163–185 (KAQAVNVAIWALASVVGVPVAIM) form a helical membrane-spanning segment. Residues 186–208 (GSAQVEDEEIECLVEIPAPQDYW) lie on the Extracellular side of the membrane. A helical membrane pass occupies residues 209 to 233 (GPVFAICIFLFSFIIPVLIISVCYS). At 234–261 (LMIRRLRGVRLLSGSREKDRNLRRITRL) the chain is on the cytoplasmic side. A helical membrane pass occupies residues 262-282 (VLVVVAVFVGCWTPVQVFVLV). Over 283–297 (QGLGVQPGSETAVAI) the chain is Extracellular. Residues 298 to 319 (LRFCTALGYVNSCLNPILYAFL) traverse the membrane as a helical segment. Residues 320-367 (DENFKACFRKFCCASSLHREMQVSDRVRSIAKDVGLGCKTSETVPRPA) lie on the Cytoplasmic side of the membrane. C331 carries S-palmitoyl cysteine lipidation.

Belongs to the G-protein coupled receptor 1 family. Post-translationally, phosphorylation at Ser-360 requires GRK3. As to expression, highly expressed in several brain areas, the intestine, liver and spleen. Detected in sympathetic stellate ganglion neurons.

The protein resides in the cell membrane. The protein localises to the cytoplasmic vesicle. G-protein coupled opioid receptor that functions as a receptor for the endogenous neuropeptide nociceptin. Ligand binding causes a conformation change that triggers signaling via guanine nucleotide-binding proteins (G proteins) and modulates the activity of down-stream effectors. Signaling via G proteins mediates inhibition of adenylate cyclase activity and calcium channel activity. Arrestins modulate signaling via G proteins and mediate the activation of alternative signaling pathways that lead to the activation of MAP kinases. Plays a role in modulating nociception and the perception of pain. Plays a role in the regulation of locomotor activity by the neuropeptide nociceptin. This Rattus norvegicus (Rat) protein is Nociceptin receptor (Oprl1).